The sequence spans 117 residues: Antimicrobial peptide AmAMP1 (117 aa).

An N-terminal signal peptide occupies residues 1-25 (MPSIRVLFVLLAVILLFMEVKMTSA). Residues 26 to 73 (ASIVKDVDEDETLENEDGEAMENSWPWHGVEDTSDYSDLSDLANSEKR) constitute a propeptide that is removed on maturation. Disulfide bonds link Cys-76–Cys-115, Cys-85–Cys-108, and Cys-94–Cys-112.

Belongs to the coral AMP family.

The protein resides in the secreted. In terms of biological role, coral peptide that probably acts as an antimicrobial peptide in the surface mucous layer of planula larvae and likely also in adults. Shows moderate to high activity against some Gram-negative and Gram-positive bacteria (tested on E.coli, B.megaterium, S.aureus, E.aesturaii, B.algicola, Acinetobacter spec.). Does not show antibacterial activity against the coral pathogen V.coralliilyticus. In Acropora millepora (Staghorn coral), this protein is Antimicrobial peptide AmAMP1.